Reading from the N-terminus, the 541-residue chain is Developmental and secondary metabolism regulator VEL1 (541 aa).

The Velvet domain maps to 26-220; it reads NRHLWYQLTV…ADQGCRVRIR (195 aa). Positions 40–45 match the Nuclear localization signal motif; it reads ERARAC. Disordered stretches follow at residues 222-447 and 464-483; these read DVRM…MPTQ and PIEAQTEPLPPPPLLPTGGK. The span at 230 to 244 shows a compositional bias: basic and acidic residues; that stretch reads GKGSGYDRREEEYAR. The segment covering 289–298 has biased composition (low complexity); it reads APSLPHAPSL. Pro residues-rich tracts occupy residues 299 to 314, 345 to 355, and 425 to 439; these read PHAPPPPAYDAPPPAA, APIPPVTPTGP, and SPAPMTPYIAPPAPS. Positions 444-472 are PEST; that stretch reads MPTQSSLAPLKIASLVSPLPPIEAQTEPL.

The protein belongs to the velvet family. VeA subfamily. As to quaternary structure, component of the heterotrimeric velvet complex composed of LAE1, VEL1 and VEL2; VEL1 acting as a bridging protein between LAE1 and VEL2.

The protein resides in the nucleus. It is found in the cytoplasm. Component of the velvet transcription factor complex that controls sexual/asexual developmental ratio in response to light, promoting sexual development in the darkness while stimulating asexual sporulation under illumination. The velvet complex acts as a global regulator for secondary metabolite gene expression. Controls the expression of the gliotoxin gene cluster. Plays a key role in mycoparasitism. The sequence is that of Developmental and secondary metabolism regulator VEL1 from Hypocrea virens (strain Gv29-8 / FGSC 10586) (Gliocladium virens).